Here is a 1405-residue protein sequence, read N- to C-terminus: DNA-directed RNA polymerase subunit beta' (1405 aa).

Residues Cys70, Cys72, Cys85, and Cys88 each coordinate Zn(2+). Asp460, Asp462, and Asp464 together coordinate Mg(2+). Zn(2+) is bound by residues Cys814, Cys888, Cys895, and Cys898.

This sequence belongs to the RNA polymerase beta' chain family. As to quaternary structure, the RNAP catalytic core consists of 2 alpha, 1 beta, 1 beta' and 1 omega subunit. When a sigma factor is associated with the core the holoenzyme is formed, which can initiate transcription. Mg(2+) serves as cofactor. It depends on Zn(2+) as a cofactor.

The catalysed reaction is RNA(n) + a ribonucleoside 5'-triphosphate = RNA(n+1) + diphosphate. DNA-dependent RNA polymerase catalyzes the transcription of DNA into RNA using the four ribonucleoside triphosphates as substrates. The protein is DNA-directed RNA polymerase subunit beta' of Shewanella woodyi (strain ATCC 51908 / MS32).